The chain runs to 255 residues: Protein 2b (255 aa).

This sequence belongs to the tobravirus protein 2b family.

Its subcellular location is the virion. May function by interacting with a small, flexible domain located at the C-terminus of the CP, forming a bridge between the virus particle and the internal surface of the vector nematode feeding apparatus. In Tobacco rattle virus (strain TCM), this protein is Protein 2b.